We begin with the raw amino-acid sequence, 273 residues long: Kit ligand (273 aa).

Residues 1 to 25 (MKKTQTWIITCIYLQLLLFNPLVKT) form the signal peptide. Q26 is modified (pyrrolidone carboxylic acid). The Extracellular portion of the chain corresponds to 26–214 (QEICRNPVTD…AKSPEDPGLQ (189 aa)). Disulfide bonds link C29-C114 and C68-C163. N-linked (GlcNAc...) asparagine; partial glycosylation is present at N90. N-linked (GlcNAc...) asparagine glycosylation is present at N145. S167 carries an O-linked (GalNAc...) serine glycan. Residues T168 and T180 are each glycosylated (O-linked (GalNAc...) threonine). Residues 190–211 (ASSLRNDSSSSNRKAAKSPEDP) are disordered. Positions 191–202 (SSLRNDSSSSNR) are enriched in low complexity. An N-linked (GlcNAc...) asparagine glycan is attached at N195. The chain crosses the membrane as a helical span at residues 215–237 (WTAMALPALISLVIGFAFGALYW). Residues 238 to 273 (KKKQSSLTRAVENIQINEEDNEISMLQQKEREFQEV) lie on the Cytoplasmic side of the membrane.

This sequence belongs to the SCF family. As to quaternary structure, homodimer, non-covalently linked. Heterotetramer with KIT, binding two KIT molecules; thereby mediates KIT dimerization and subsequent activation by autophosphorylation. Post-translationally, a soluble form is produced by proteolytic processing of isoform 1 in the extracellular domain. In terms of processing, the identity of N- and O-linked saccharides is not reported in PubMed:1708771. The O-linked polysaccharides are probably the mucin type linked to GalNAc.

The protein localises to the cell membrane. It is found in the cytoplasm. The protein resides in the cytoskeleton. It localises to the cell projection. Its subcellular location is the lamellipodium. The protein localises to the filopodium. It is found in the secreted. Ligand for the receptor-type protein-tyrosine kinase KIT. Plays an essential role in the regulation of cell survival and proliferation, hematopoiesis, stem cell maintenance, gametogenesis, mast cell development, migration and function, and in melanogenesis. KITLG/SCF binding can activate several signaling pathways. Promotes phosphorylation of PIK3R1, the regulatory subunit of phosphatidylinositol 3-kinase, and subsequent activation of the kinase AKT1. KITLG/SCF and KIT also transmit signals via GRB2 and activation of RAS, RAF1 and the MAP kinases MAPK1/ERK2 and/or MAPK3/ERK1. KITLG/SCF and KIT promote activation of STAT family members STAT1, STAT3 and STAT5. KITLG/SCF and KIT promote activation of PLCG1, leading to the production of the cellular signaling molecules diacylglycerol and inositol 1,4,5-trisphosphate. KITLG/SCF acts synergistically with other cytokines, probably interleukins. The chain is Kit ligand (Kitlg) from Rattus norvegicus (Rat).